Consider the following 89-residue polypeptide: Small ribosomal subunit protein uS19 (89 aa).

It belongs to the universal ribosomal protein uS19 family.

Functionally, protein S19 forms a complex with S13 that binds strongly to the 16S ribosomal RNA. This Stenotrophomonas maltophilia (strain K279a) protein is Small ribosomal subunit protein uS19.